The following is a 298-amino-acid chain: Glycine--tRNA ligase alpha subunit (298 aa).

The protein belongs to the class-II aminoacyl-tRNA synthetase family. Tetramer of two alpha and two beta subunits.

The protein localises to the cytoplasm. The enzyme catalyses tRNA(Gly) + glycine + ATP = glycyl-tRNA(Gly) + AMP + diphosphate. This Helicobacter pylori (strain HPAG1) protein is Glycine--tRNA ligase alpha subunit.